Consider the following 280-residue polypeptide: Diaminopimelate epimerase (280 aa).

Positions 13 and 66 each coordinate substrate. Cys-75 acts as the Proton donor in catalysis. Substrate contacts are provided by residues 76-77 (GN), Asn-165, Asn-198, and 216-217 (ER). Cys-225 (proton acceptor) is an active-site residue. Residue 226-227 (GT) coordinates substrate.

Belongs to the diaminopimelate epimerase family. In terms of assembly, homodimer.

The protein resides in the cytoplasm. It carries out the reaction (2S,6S)-2,6-diaminopimelate = meso-2,6-diaminopimelate. The protein operates within amino-acid biosynthesis; L-lysine biosynthesis via DAP pathway; DL-2,6-diaminopimelate from LL-2,6-diaminopimelate: step 1/1. Catalyzes the stereoinversion of LL-2,6-diaminopimelate (L,L-DAP) to meso-diaminopimelate (meso-DAP), a precursor of L-lysine and an essential component of the bacterial peptidoglycan. This Cyanothece sp. (strain PCC 7425 / ATCC 29141) protein is Diaminopimelate epimerase.